Reading from the N-terminus, the 309-residue chain is Tagatose-6-phosphate kinase (309 aa).

It belongs to the carbohydrate kinase PfkB family. LacC subfamily.

The enzyme catalyses D-tagatofuranose 6-phosphate + ATP = D-tagatofuranose 1,6-bisphosphate + ADP + H(+). The protein operates within carbohydrate metabolism; D-tagatose 6-phosphate degradation; D-glyceraldehyde 3-phosphate and glycerone phosphate from D-tagatose 6-phosphate: step 1/2. The sequence is that of Tagatose-6-phosphate kinase from Streptococcus pneumoniae (strain Taiwan19F-14).